The chain runs to 330 residues: Methionyl-tRNA formyltransferase (330 aa).

117–120 (SLLP) contacts (6S)-5,6,7,8-tetrahydrofolate.

The protein belongs to the Fmt family.

The catalysed reaction is L-methionyl-tRNA(fMet) + (6R)-10-formyltetrahydrofolate = N-formyl-L-methionyl-tRNA(fMet) + (6S)-5,6,7,8-tetrahydrofolate + H(+). Its function is as follows. Attaches a formyl group to the free amino group of methionyl-tRNA(fMet). The formyl group appears to play a dual role in the initiator identity of N-formylmethionyl-tRNA by promoting its recognition by IF2 and preventing the misappropriation of this tRNA by the elongation apparatus. The chain is Methionyl-tRNA formyltransferase from Verminephrobacter eiseniae (strain EF01-2).